The sequence spans 234 residues: Large ribosomal subunit protein uL1 (234 aa).

This sequence belongs to the universal ribosomal protein uL1 family. Part of the 50S ribosomal subunit.

Functionally, binds directly to 23S rRNA. The L1 stalk is quite mobile in the ribosome, and is involved in E site tRNA release. Its function is as follows. Protein L1 is also a translational repressor protein, it controls the translation of the L11 operon by binding to its mRNA. The protein is Large ribosomal subunit protein uL1 of Pectobacterium carotovorum subsp. carotovorum (strain PC1).